A 679-amino-acid polypeptide reads, in one-letter code: Methionine--tRNA ligase (679 aa).

The 'HIGH' region signature appears at 15 to 25; that stretch reads PYANGPVHIGH. Residues cysteine 147, cysteine 150, cysteine 160, and cysteine 163 each contribute to the Zn(2+) site. Residues 332–336 carry the 'KMSKS' region motif; the sequence is KISTS. Threonine 335 provides a ligand contact to ATP. The 102-residue stretch at 578 to 679 folds into the tRNA-binding domain; it reads DFMKLDIRVG…REVKPGSEVK (102 aa).

Belongs to the class-I aminoacyl-tRNA synthetase family. MetG type 1 subfamily. In terms of assembly, homodimer. The cofactor is Zn(2+).

The protein localises to the cytoplasm. It carries out the reaction tRNA(Met) + L-methionine + ATP = L-methionyl-tRNA(Met) + AMP + diphosphate. Functionally, is required not only for elongation of protein synthesis but also for the initiation of all mRNA translation through initiator tRNA(fMet) aminoacylation. This Bacteroides fragilis (strain ATCC 25285 / DSM 2151 / CCUG 4856 / JCM 11019 / LMG 10263 / NCTC 9343 / Onslow / VPI 2553 / EN-2) protein is Methionine--tRNA ligase.